The following is a 396-amino-acid chain: uncharacterized protein (396 aa).

[4Fe-4S] cluster is bound by residues Cys-8, Cys-14, Cys-17, and Cys-95. The S-adenosyl-L-methionine site is built by Gln-229, Tyr-258, Glu-279, and Asp-325. The active-site Nucleophile is the Cys-352.

Belongs to the class I-like SAM-binding methyltransferase superfamily. RNA M5U methyltransferase family.

This is an uncharacterized protein from Chlamydia trachomatis serovar D (strain ATCC VR-885 / DSM 19411 / UW-3/Cx).